The following is a 445-amino-acid chain: Anthranilate N-benzoyltransferase protein 3 (445 aa).

Active-site proton acceptor residues include H164 and D392.

It belongs to the plant acyltransferase family. N-terminus is blocked.

It catalyses the reaction anthranilate + benzoyl-CoA = N-benzoylanthranilate + CoA. The protein operates within phytoalexin biosynthesis; methoxydianthramide B biosynthesis. Catalyzes the formation of N-benzoylanthranilate, in the course of methoxydianthramide B, a phytoalexin. Phytoalexins are produced in response to infection by parasites, and are essential for the expression of disease resistance. In Dianthus caryophyllus (Carnation), this protein is Anthranilate N-benzoyltransferase protein 3 (HCBT3).